The primary structure comprises 188 residues: Ribosome-recycling factor (188 aa).

It belongs to the RRF family.

It is found in the cytoplasm. Functionally, responsible for the release of ribosomes from messenger RNA at the termination of protein biosynthesis. May increase the efficiency of translation by recycling ribosomes from one round of translation to another. This chain is Ribosome-recycling factor, found in Cereibacter sphaeroides (strain ATCC 17025 / ATH 2.4.3) (Rhodobacter sphaeroides).